The primary structure comprises 574 residues: MKTIIINGVQFNTDEDTTILKFARDNNIDISALCFLNNCNNDINKCEICTVEVEGTGLVTACDTLIEDGMIINTNSDAVNEKIKSRISQLLDIHEFKCGPCNRRENCEFLKLVIKYKARASKPFLPKDKTEYVDERSKSLTVDRTKCLLCGRCVNACGKNTETYAMKFLNKNGKTIIGAEDEKCFDDTNCLLCGQCIIACPVAALSEKSHMDRVKNALNAPEKHVIVAMAPSVRASIGELFNMGFGVDVTGKIYTALRQLGFDKIFDINFGADMTIMEEATELVQRIENNGPFPMFTSCCPGWVRQAENYYPELLNNLSSAKSPQQIFGTASKTYYPSISGLDPKNVFTVTVMPCTSKKFEADRPQMEKDGLRDIDAVITTRELAKMIKDAKIPFAKLEDSEADPAMGEYSGAGAIFGATGGVMEAALRSAKDFAENAELEDIEYKQVRGLNGIKEAEVEINNNKYNVAVINGASNLFKFMKSGMINEKQYHFIEVMACHGGCVNGGGQPHVNPKDLEKVDIKKVRASVLYNQDEHLSKRKSHENTALVKMYQNYFGKPGEGRAHEILHFKYKK.

Positions 1 to 78 (MKTIIINGVQ…GMIINTNSDA (78 aa)) constitute a 2Fe-2S ferredoxin-type domain. Residues C34, C46, C49, and C62 each coordinate [2Fe-2S] cluster. Residues 78 to 117 (AVNEKIKSRISQLLDIHEFKCGPCNRRENCEFLKLVIKYK) form the 4Fe-4S His(Cys)3-ligated-type domain. Positions 94, 98, 101, 107, 147, 150, 153, 157, 190, 193, 196, 200, 300, 355, 499, and 503 each coordinate [4Fe-4S] cluster. 2 4Fe-4S ferredoxin-type domains span residues 138 to 167 (KSLT…YAMK) and 181 to 210 (DEKC…EKSH). C503 provides a ligand contact to Fe(2+).

In terms of assembly, monomer. [2Fe-2S] cluster serves as cofactor. Requires [4Fe-4S] cluster as cofactor. The cofactor is Fe(2+).

The enzyme catalyses H2 + 2 oxidized [2Fe-2S]-[ferredoxin] = 2 reduced [2Fe-2S]-[ferredoxin] + 2 H(+). In Clostridium pasteurianum, this protein is Iron hydrogenase 1.